The primary structure comprises 436 residues: Xylose isomerase (436 aa).

The Mg(2+) site is built by Asp-306 and Asp-308.

This sequence belongs to the xylose isomerase family. As to quaternary structure, homotetramer. Requires Mg(2+) as cofactor.

The protein resides in the cytoplasm. It carries out the reaction alpha-D-xylose = alpha-D-xylulofuranose. This chain is Xylose isomerase, found in Rhizobium rhizogenes (strain K84 / ATCC BAA-868) (Agrobacterium radiobacter).